A 296-amino-acid polypeptide reads, in one-letter code: MSQPVKQTDFPGLKLVNRGKVRDIYDLGDALLMVTSDRISAFDVIMNEPIPDKGKVLTQISKFWFSQMEDIIPNHIISTDVADYPAACQPYAEVLAGRSMLVKKAEPLAAECIVRGYVSGSGWKDYKATGSICGIKLPEGLKESDRLAEPIFTPSTKAELGTHDENISFDEMVKVCGKELAEQAREATIRIYCRAREIADQKGIIIADTKFEFGVYEGKLIIIDECLTPDSSRFWPKDQYQPGGPQPSFDKQFLRDYLETLDWGKTAPAPPLPEEIVTKTGEKYKEALFKLAGITV.

This sequence belongs to the SAICAR synthetase family.

It carries out the reaction 5-amino-1-(5-phospho-D-ribosyl)imidazole-4-carboxylate + L-aspartate + ATP = (2S)-2-[5-amino-1-(5-phospho-beta-D-ribosyl)imidazole-4-carboxamido]succinate + ADP + phosphate + 2 H(+). The protein operates within purine metabolism; IMP biosynthesis via de novo pathway; 5-amino-1-(5-phospho-D-ribosyl)imidazole-4-carboxamide from 5-amino-1-(5-phospho-D-ribosyl)imidazole-4-carboxylate: step 1/2. The protein is Phosphoribosylaminoimidazole-succinocarboxamide synthase of Trichlorobacter lovleyi (strain ATCC BAA-1151 / DSM 17278 / SZ) (Geobacter lovleyi).